The chain runs to 485 residues: NADH-quinone oxidoreductase subunit N (485 aa).

14 helical membrane-spanning segments follow: residues 8-28 (LIAL…MLSI), 35-55 (FLNA…LWFV), 71-91 (GFAM…CTFA), 105-125 (FYLL…ANHL), 127-147 (SLFL…GYAF), 159-179 (YTIL…LVYA), 203-223 (LLAG…LVPF), 235-255 (PAPV…GVVM), 271-291 (VVLA…ALSQ), 297-317 (LLGY…IALQ), 326-346 (VGVY…VVSL), 373-393 (AAVM…LGFI), 408-430 (WWLV…RVAV), and 455-475 (IVVL…QPLI).

It belongs to the complex I subunit 2 family. In terms of assembly, NDH-1 is composed of 13 different subunits. Subunits NuoA, H, J, K, L, M, N constitute the membrane sector of the complex.

The protein resides in the cell inner membrane. The catalysed reaction is a quinone + NADH + 5 H(+)(in) = a quinol + NAD(+) + 4 H(+)(out). NDH-1 shuttles electrons from NADH, via FMN and iron-sulfur (Fe-S) centers, to quinones in the respiratory chain. The immediate electron acceptor for the enzyme in this species is believed to be ubiquinone. Couples the redox reaction to proton translocation (for every two electrons transferred, four hydrogen ions are translocated across the cytoplasmic membrane), and thus conserves the redox energy in a proton gradient. The chain is NADH-quinone oxidoreductase subunit N from Shigella sonnei (strain Ss046).